The sequence spans 493 residues: Ketol-acid reductoisomerase (NADP(+)) (493 aa).

A KARI N-terminal Rossmann domain is found at 14–208 (LDQLGRCRFM…GGDRAGVLES (195 aa)). NADP(+) is bound by residues 45–48 (CGAQ), R68, R76, S78, and 108–110 (DKQ). Residue H132 is part of the active site. G158 contributes to the NADP(+) binding site. KARI C-terminal knotted domains follow at residues 209–345 (SFVA…APKA) and 346–486 (DGIK…MTDM). 4 residues coordinate Mg(2+): D217, E221, E390, and E394. S415 contributes to the substrate binding site.

It belongs to the ketol-acid reductoisomerase family. The cofactor is Mg(2+).

It carries out the reaction (2R)-2,3-dihydroxy-3-methylbutanoate + NADP(+) = (2S)-2-acetolactate + NADPH + H(+). The catalysed reaction is (2R,3R)-2,3-dihydroxy-3-methylpentanoate + NADP(+) = (S)-2-ethyl-2-hydroxy-3-oxobutanoate + NADPH + H(+). Its pathway is amino-acid biosynthesis; L-isoleucine biosynthesis; L-isoleucine from 2-oxobutanoate: step 2/4. The protein operates within amino-acid biosynthesis; L-valine biosynthesis; L-valine from pyruvate: step 2/4. Functionally, involved in the biosynthesis of branched-chain amino acids (BCAA). Catalyzes an alkyl-migration followed by a ketol-acid reduction of (S)-2-acetolactate (S2AL) to yield (R)-2,3-dihydroxy-isovalerate. In the isomerase reaction, S2AL is rearranged via a Mg-dependent methyl migration to produce 3-hydroxy-3-methyl-2-ketobutyrate (HMKB). In the reductase reaction, this 2-ketoacid undergoes a metal-dependent reduction by NADPH to yield (R)-2,3-dihydroxy-isovalerate. This chain is Ketol-acid reductoisomerase (NADP(+)), found in Mannheimia succiniciproducens (strain KCTC 0769BP / MBEL55E).